Here is a 559-residue protein sequence, read N- to C-terminus: Potassium-transporting ATPase potassium-binding subunit (559 aa).

The next 13 membrane-spanning stretches (helical) occupy residues 5–25 (GFLL…PLGS), 27–47 (LARL…RILW), 63–83 (LLAL…LLFW), 132–152 (GLTV…FALI), 170–190 (LVRI…LFFI), 253–273 (LAQM…FGEA), 283–303 (LLWA…WAEV), 327–347 (FGVL…CGAV), 356–376 (ALGG…FGGV), 379–399 (GLYG…LMIG), 416–436 (MTAL…ALAM), 484–504 (LLAF…MAIA), and 524–544 (GALF…LTFI).

This sequence belongs to the KdpA family. In terms of assembly, the system is composed of three essential subunits: KdpA, KdpB and KdpC.

It localises to the cell inner membrane. In terms of biological role, part of the high-affinity ATP-driven potassium transport (or Kdp) system, which catalyzes the hydrolysis of ATP coupled with the electrogenic transport of potassium into the cytoplasm. This subunit binds the periplasmic potassium ions and delivers the ions to the membrane domain of KdpB through an intramembrane tunnel. The sequence is that of Potassium-transporting ATPase potassium-binding subunit from Salmonella enteritidis PT4 (strain P125109).